A 310-amino-acid chain; its full sequence is Haloalkane dehalogenase (310 aa).

Residues 49–295 (VFLCLHGEPT…DAGHFVQEFG (247 aa)) enclose the AB hydrolase-1 domain. Asp124 serves as the catalytic Nucleophile. Chloride contacts are provided by Trp125 and Trp175. Asp260 functions as the Proton donor in the catalytic mechanism. The active-site Proton acceptor is His289.

This sequence belongs to the haloalkane dehalogenase family. Type 1 subfamily. As to quaternary structure, monomer.

The enzyme catalyses 1-haloalkane + H2O = a halide anion + a primary alcohol + H(+). The catalysed reaction is 1,2-dichloroethane + H2O = 2-chloroethanol + chloride + H(+). It functions in the pathway xenobiotic degradation; 1,2-dichloroethane degradation; glycolate from 1,2-dichloroethane: step 1/4. Inhibited by thiol reagents such as p-chloromercuribenzoate and iodoacetamide. In terms of biological role, catalyzes hydrolytic cleavage of carbon-halogen bonds in halogenated aliphatic compounds, leading to the formation of the corresponding primary alcohols, halide ions and protons. Has a broad substrate specificity, which includes terminally mono- and di- chlorinated and brominated alkanes (up to C4 only). The highest activity was found with 1,2-dichloroethane, 1,3-dichloropropane, and 1,2-dibromoethane. In Xanthobacter autotrophicus, this protein is Haloalkane dehalogenase (dhlA).